Reading from the N-terminus, the 573-residue chain is Solute carrier family 41 member 2 (573 aa).

Over 1 to 162 (MTNSKGRSIT…KESSGIMALQ (162 aa)) the chain is Extracellular. A phosphoserine mark is found at S136 and S137. The helical transmembrane segment at 163–183 (ILVPFLLAGFGTVSAGMVLDI) threads the bilayer. The Cytoplasmic portion of the chain corresponds to 184 to 195 (VQHWEVFRKVTE). The helical transmembrane segment at 196–216 (VFILVPALLGLKGNLEMTLAS) threads the bilayer. The Extracellular segment spans residues 217-245 (RLSTAVNIGKMDSPIEKWNLIIGNLALKQ). Residues 246-266 (VQATVVGFLAAVAAIILGWIP) form a helical membrane-spanning segment. At 267-282 (EGKYYLDHSILLCSSS) the chain is on the cytoplasmic side. The helical transmembrane segment at 283 to 303 (VATAFIASLLQGIIMVGVIVG) threads the bilayer. At 304 to 313 (SKKTGINPDN) the chain is on the extracellular side. Residues 314-334 (VATPIAASFGDLITLAILAWI) form a helical membrane-spanning segment. At 335–347 (SQGLYSCLETYYY) the chain is on the cytoplasmic side. The chain crosses the membrane as a helical span at residues 348-368 (ISPLVGVFFLALTPIWIIIAA). The Extracellular segment spans residues 369 to 376 (KHPATRTV). Residues 377-397 (LHSGWEPVITAMVISSIGGLI) form a helical membrane-spanning segment. Residues 398-406 (LDTTVSDPN) lie on the Cytoplasmic side of the membrane. Residues 407 to 427 (LVGIVVYTPVINGIGGNLVAI) traverse the membrane as a helical segment. The Extracellular segment spans residues 428 to 469 (QASRISTYLHLHSIPGELPDEPKGCYYPFRTFFGPGVNNKSA). The chain crosses the membrane as a helical span at residues 470–490 (QVLLLLVIPGHLIFLYTIHLM). The Cytoplasmic portion of the chain corresponds to 491–498 (KSGHTSLT). A helical transmembrane segment spans residues 499–519 (IIFIVVYLFAAVLQVFTLLWI). Over 520–543 (ADWMVHHFWRKGKDPDSFSIPYLT) the chain is Extracellular. Residues 544–564 (ALGDLLGTALLALSFHFLWLI) traverse the membrane as a helical segment. Topologically, residues 565–573 (GDRDGDVGD) are cytoplasmic.

This sequence belongs to the SLC41A transporter family.

It is found in the cell membrane. The catalysed reaction is Mg(2+)(in) = Mg(2+)(out). It catalyses the reaction Mn(2+)(in) = Mn(2+)(out). The enzyme catalyses Co(2+)(in) = Co(2+)(out). It carries out the reaction Ni(2+)(in) = Ni(2+)(out). The catalysed reaction is Fe(2+)(in) = Fe(2+)(out). Functionally, acts as a plasma-membrane magnesium transporter. Can also mediate the transport of other divalent metal cations in an order of Ba(2+) &gt; Ni(2+) &gt; Co(2+) &gt; Fe(2+) &gt; Mn(2+). The sequence is that of Solute carrier family 41 member 2 (SLC41A2) from Macaca fascicularis (Crab-eating macaque).